The following is a 511-amino-acid chain: Maturase K (511 aa).

It belongs to the intron maturase 2 family. MatK subfamily.

It is found in the plastid. The protein resides in the chloroplast. Functionally, usually encoded in the trnK tRNA gene intron. Probably assists in splicing its own and other chloroplast group II introns. This Hordeum secalinum (Meadow barley) protein is Maturase K.